The chain runs to 51 residues: Insulin (51 aa).

3 disulfide bridges follow: cysteine 8–cysteine 37, cysteine 20–cysteine 50, and cysteine 36–cysteine 41.

Belongs to the insulin family. In terms of assembly, heterodimer of a B chain and an A chain linked by two disulfide bonds.

It is found in the secreted. Its function is as follows. Insulin decreases blood glucose concentration. It increases cell permeability to monosaccharides, amino acids and fatty acids. It accelerates glycolysis, the pentose phosphate cycle, and glycogen synthesis in liver. This Pagrus major (Red sea bream) protein is Insulin.